A 1476-amino-acid polypeptide reads, in one-letter code: ABC-type transporter frbG (1476 aa).

The next 5 membrane-spanning stretches (helical) occupy residues 26-46 (LLFE…VLAL), 64-84 (LYYA…VQLI), 97-117 (SIAI…LCHL), 122-142 (SAKP…FDII), and 146-166 (TLWI…GLVL). Asn244 is a glycosylation site (N-linked (GlcNAc...) asparagine). The next 4 helical transmembrane spans lie at 266–286 (FLAG…QPFL), 302–322 (AGAT…GIAI), 380–400 (LQTM…TWLL), and 409–429 (IPSV…AVMA). The 280-residue stretch at 274–553 (LALTGFTFAQ…FVHSAVNLML (280 aa)) folds into the ABC transmembrane type-1 1 domain. N-linked (GlcNAc...) asparagine glycosylation occurs at Asn464. Transmembrane regions (helical) follow at residues 487 to 507 (CLVF…IIGF) and 533 to 553 (IFAL…NLML). The region spanning 619-845 (IQARDTNIGW…VTAHVHNQTS (227 aa)) is the ABC transporter 1 domain. Residue 652-659 (GPTNSGKS) coordinates ATP. N-linked (GlcNAc...) asparagine glycans are attached at residues Asn694, Asn776, Asn805, and Asn842. 5 helical membrane-spanning segments follow: residues 898-918 (AVFL…SIWV), 936-956 (YLLV…GGGS), 1017-1037 (LFAF…SPFV), 1121-1141 (LGLV…IVIV), and 1151-1171 (GFLG…GGFI). One can recognise an ABC transmembrane type-1 2 domain in the interval 898-1179 (AVFLALCMAL…FIGGWTGLET (282 aa)). The ABC transporter 2 domain occupies 1216 to 1447 (IVFDDVTASY…LSSSSPTSSP (232 aa)). N-linked (GlcNAc...) asparagine glycosylation is present at Asn1235. Residue 1250–1257 (GRTGSGKS) participates in ATP binding.

This sequence belongs to the ABC transporter superfamily. ABCC family. Conjugate transporter (TC 3.A.1.208) subfamily.

It is found in the cell membrane. Its function is as follows. ABC-type transporter; part of the gene cluster that mediates the biosynthesis of the antifungal antibiotic FR901469, an inhibitor of beta-1,3-glucansynthase, exerting antifungal activity against the pathogenes Candida albicans and Aspergillus fumigatus. FR901469 is a cyclic depsipeptide containing 12 amino acid residues and a fatty acid chain. Probably involved in the secretion of FR901469. This Dothideomycetidae sp. (strain 11243) (Fungal sp. (strain No.11243)) protein is ABC-type transporter frbG.